The primary structure comprises 125 residues: Large ribosomal subunit protein bL12 (125 aa).

Belongs to the bacterial ribosomal protein bL12 family. In terms of assembly, homodimer. Part of the ribosomal stalk of the 50S ribosomal subunit. Forms a multimeric L10(L12)X complex, where L10 forms an elongated spine to which 2 to 4 L12 dimers bind in a sequential fashion. Binds GTP-bound translation factors.

Functionally, forms part of the ribosomal stalk which helps the ribosome interact with GTP-bound translation factors. Is thus essential for accurate translation. The sequence is that of Large ribosomal subunit protein bL12 from Bradyrhizobium sp. (strain BTAi1 / ATCC BAA-1182).